The primary structure comprises 199 residues: Photosystem II D1 precursor processing protein PSB27-H2, chloroplastic (199 aa).

It belongs to the Psb27 family. In terms of assembly, interacts with the C-terminus of both the precursor and mature form of D1.

Its subcellular location is the plastid. It is found in the chloroplast thylakoid lumen. Functionally, required, but not essential, for D1 (psbA) precursor processing and thus correct photosystem II assembly (PSII). The polypeptide is Photosystem II D1 precursor processing protein PSB27-H2, chloroplastic (PSB27-2) (Arabidopsis thaliana (Mouse-ear cress)).